A 360-amino-acid polypeptide reads, in one-letter code: Phospho-N-acetylmuramoyl-pentapeptide-transferase (360 aa).

The next 10 membrane-spanning stretches (helical) occupy residues Tyr21–Gly41, Thr73–Leu93, Ser94–Val114, Trp132–Gly152, Ile168–Ser188, Gly199–Thr219, Leu239–Tyr259, Val263–Leu283, Phe288–Val308, and Val338–Lys358.

The protein belongs to the glycosyltransferase 4 family. MraY subfamily. It depends on Mg(2+) as a cofactor.

The protein localises to the cell inner membrane. The catalysed reaction is UDP-N-acetyl-alpha-D-muramoyl-L-alanyl-gamma-D-glutamyl-meso-2,6-diaminopimeloyl-D-alanyl-D-alanine + di-trans,octa-cis-undecaprenyl phosphate = di-trans,octa-cis-undecaprenyl diphospho-N-acetyl-alpha-D-muramoyl-L-alanyl-D-glutamyl-meso-2,6-diaminopimeloyl-D-alanyl-D-alanine + UMP. It participates in cell wall biogenesis; peptidoglycan biosynthesis. In terms of biological role, catalyzes the initial step of the lipid cycle reactions in the biosynthesis of the cell wall peptidoglycan: transfers peptidoglycan precursor phospho-MurNAc-pentapeptide from UDP-MurNAc-pentapeptide onto the lipid carrier undecaprenyl phosphate, yielding undecaprenyl-pyrophosphoryl-MurNAc-pentapeptide, known as lipid I. The polypeptide is Phospho-N-acetylmuramoyl-pentapeptide-transferase (Mannheimia succiniciproducens (strain KCTC 0769BP / MBEL55E)).